Here is a 251-residue protein sequence, read N- to C-terminus: Aquaporin TIP1-1 (251 aa).

An N-acetylmethionine modification is found at methionine 1. The Cytoplasmic portion of the chain corresponds to 1–23 (MPIRNIAIGRPDEATRPDALKAA). A helical transmembrane segment spans residues 24 to 44 (LAEFISTLIFVVAGSGSGMAF). Residues 45 to 56 (NKLTENGATTPS) lie on the Vacuolar side of the membrane. The helical transmembrane segment at 57–77 (GLVAAAVAHAFGLFVAVSVGA) threads the bilayer. Over 78-103 (NISGGHVNPAVTFGAFIGGNITLLRG) the chain is Cytoplasmic. An NPA 1 motif is present at residues 85 to 87 (NPA). A helical membrane pass occupies residues 104–124 (ILYWIAQLLGSVVACLILKFA). Over 125–143 (TGGLAVPAFGLSAGVGVLN) the chain is Vacuolar. The helical transmembrane segment at 144–164 (AFVFEIVMTFGLVYTVYATAI) threads the bilayer. Topologically, residues 165–172 (DPKNGSLG) are cytoplasmic. A helical transmembrane segment spans residues 173–193 (TIAPIAIGFIVGANILAGGAF). Over 194–218 (SGASMNPAVAFGPAVVSWTWTNHWV) the chain is Vacuolar. An NPA 2 motif is present at residues 199–201 (NPA). Residues 219 to 239 (YWAGPLVGGGIAGLIYEVFFI) form a helical membrane-spanning segment. At 240-251 (NTTHEQLPTTDY) the chain is on the cytoplasmic side.

It belongs to the MIP/aquaporin (TC 1.A.8) family. TIP (TC 1.A.8.10) subfamily. Interacts with cucumber mosaic virus (CMV) Protein 1a. As to expression, in all the vegetative organs, but not in seeds. Preferentially expressed in roots.

The protein localises to the vacuole membrane. Water channel required to facilitate the transport of water, diffusion of amino acids and/or peptides from the vacuolar compartment to the cytoplasm. Does not promote glycerol permeability. May play a role in the control of cell turgor and cell expansion. Its function is impaired by Hg(2+). May be involved in a vesicle-based metabolite routing through or between pre-vacuolar compartments and the central vacuole. Transports urea in yeast cells in a pH-independent manner. Transports H(2)O(2) in yeast cells. This chain is Aquaporin TIP1-1 (TIP1-1), found in Arabidopsis thaliana (Mouse-ear cress).